We begin with the raw amino-acid sequence, 577 residues long: Moesin (577 aa).

An FERM domain is found at 2–295; the sequence is PKTINVRVTT…GNHELYMRRR (294 aa). Serine 74 carries the post-translational modification Phosphoserine. Lysine 79 carries the post-translational modification N6-acetyllysine. Residue lysine 83 is modified to N6-succinyllysine. The [IL]-x-C-x-x-[DE] motif motif lies at 115–120; sequence IYCPPE. Tyrosine 116 carries the phosphotyrosine modification. Cysteine 117 bears the S-nitrosocysteine mark. N6-acetyllysine is present on residues lysine 139 and lysine 165. The segment covering 375 to 401 has biased composition (basic and acidic residues); it reads LEQERKRAQSEAEKLAKERQEAEEAKE. 2 disordered regions span residues 375–409 and 466–518; these read LEQE…ASQD and AMST…NERV. Serine 407 carries the post-translational modification Phosphoserine. Acidic residues predominate over residues 476-487; it reads AENEQDEQDENG. The span at 492–518 shows a compositional bias: basic and acidic residues; the sequence is AELRADAMAKDRSEEERTTEAEKNERV. Serine 527 carries the phosphoserine modification. At threonine 558 the chain carries Phosphothreonine; by ROCK2 and STK10.

In terms of assembly, in resting T-cells, part of a PAG1-NHERF1-MSN complex which is disrupted upon TCR activation. Interacts with NHERF1. Interacts with PPP1R16B. Interacts with PDZD8. Interacts with SELPLG and SYK; these interactions mediate the activation of SYK by SELPLG. Interacts with PDPN (via cytoplasmic domain); this interaction activates RHOA and promotes epithelial-mesenchymal transition. Interacts with SPN/CD43 cytoplasmic tail. Interacts with CD44. Interacts with ICAM2. Interacts with ICAM3 (via C-terminus). Interacts with PDZD8. Interacts with F-actin. Interacts with CD46. Interacts with PTPN6. Phosphorylation on Thr-558 is crucial for the formation of microvilli-like structures. Phosphorylation by ROCK2 suppresses the head-to-tail association of the N-terminal and C-terminal halves resulting in an opened conformation which is capable of actin and membrane-binding. Phosphorylation on Thr-558 by STK10 negatively regulates lymphocyte migration and polarization. Post-translationally, S-nitrosylation of Cys-117 is induced by interferon-gamma and oxidatively-modified low-densitity lipoprotein (LDL(ox)) implicating the iNOS-S100A8/9 transnitrosylase complex.

It localises to the cell membrane. It is found in the cytoplasm. Its subcellular location is the cytoskeleton. The protein resides in the apical cell membrane. The protein localises to the cell projection. It localises to the microvillus membrane. It is found in the microvillus. A head-to-tail association, of the N-terminal and C-terminal halves results in a closed conformation (inactive form) which is incapable of actin or membrane-binding. In terms of biological role, ezrin-radixin-moesin (ERM) family protein that connects the actin cytoskeleton to the plasma membrane and thereby regulates the structure and function of specific domains of the cell cortex. Tethers actin filaments by oscillating between a resting and an activated state providing transient interactions between moesin and the actin cytoskeleton. Once phosphorylated on its C-terminal threonine, moesin is activated leading to interaction with F-actin and cytoskeletal rearrangement. These rearrangements regulate many cellular processes, including cell shape determination, membrane transport, and signal transduction. The role of moesin is particularly important in immunity acting on both T and B-cells homeostasis and self-tolerance, regulating lymphocyte egress from lymphoid organs. Modulates phagolysosomal biogenesis in macrophages. Participates also in immunologic synapse formation. This chain is Moesin, found in Bos taurus (Bovine).